Here is a 651-residue protein sequence, read N- to C-terminus: Acetyl-coenzyme A synthetase (651 aa).

CoA-binding positions include 193–196 (RAGR), threonine 313, and asparagine 337. Residues 389–391 (GEP), 413–418 (DTWWQT), aspartate 502, and arginine 517 each bind ATP. Serine 525 is a binding site for CoA. Arginine 528 lines the ATP pocket. Mg(2+)-binding residues include valine 539, histidine 541, and valine 544. Position 586 (arginine 586) interacts with CoA. N6-acetyllysine is present on lysine 611.

Belongs to the ATP-dependent AMP-binding enzyme family. Mg(2+) is required as a cofactor. In terms of processing, acetylated. Deacetylation by the SIR2-homolog deacetylase activates the enzyme.

The catalysed reaction is acetate + ATP + CoA = acetyl-CoA + AMP + diphosphate. Catalyzes the conversion of acetate into acetyl-CoA (AcCoA), an essential intermediate at the junction of anabolic and catabolic pathways. AcsA undergoes a two-step reaction. In the first half reaction, AcsA combines acetate with ATP to form acetyl-adenylate (AcAMP) intermediate. In the second half reaction, it can then transfer the acetyl group from AcAMP to the sulfhydryl group of CoA, forming the product AcCoA. This is Acetyl-coenzyme A synthetase from Shewanella denitrificans (strain OS217 / ATCC BAA-1090 / DSM 15013).